A 287-amino-acid chain; its full sequence is Protein HEXIM2 (287 aa).

2 disordered regions span residues 1 to 212 (MKDW…RSKE) and 266 to 287 (RLRQENEMWNREGGRRGGQPGS). At serine 31 the chain carries Phosphoserine. Threonine 34 and threonine 48 each carry phosphothreonine. Serine 53, serine 55, serine 73, serine 78, and serine 83 each carry phosphoserine. Residues 89–105 (ARKKHRRRPSKRKRHWR) are compositionally biased toward basic residues. Residues 115 to 134 (KQQRDERQSQRASRVREEMF) are compositionally biased toward basic and acidic residues. Residues 142 to 145 (PYNT) are interaction with P-TEFb. Basic and acidic residues-rich tracts occupy residues 181 to 212 (GQGRARGEFQQKDFSEAYERYHTESLQGRSKE) and 266 to 280 (RLRQENEMWNREGGR). A coiled-coil region spans residues 208 to 278 (GRSKEELVRD…QENEMWNREG (71 aa)). Residues 227 to 287 (QAEEEMRRLR…GGRRGGQPGS (61 aa)) form an interaction with CCNT1, HEXIM1 and HEXIM2 region.

It belongs to the HEXIM family. As to quaternary structure, homooligomer and heterooligomer with HEXIM1; probably dimeric. Core component of the 7SK RNP complex, at least composed of 7SK RNA, LARP7, MEPCE, HEXIM1 (or HEXIM2) and P-TEFb (composed of CDK9 and CCNT1/cyclin-T1). Interacts with CCNT2.

The protein localises to the nucleus. Transcriptional regulator which functions as a general RNA polymerase II transcription inhibitor. Core component of the 7SK RNP complex: in cooperation with 7SK snRNA sequesters P-TEFb in a large inactive 7SK snRNP complex preventing RNA polymerase II phosphorylation and subsequent transcriptional elongation. The protein is Protein HEXIM2 (HEXIM2) of Bos taurus (Bovine).